We begin with the raw amino-acid sequence, 301 residues long: Ribonuclease H2 subunit A (301 aa).

Met-1 carries the N-acetylmethionine modification. An RNase H type-2 domain is found at 28–251; the sequence is PCVLGVDEAG…AQAILEKEAE (224 aa). Asp-34, Glu-35, and Asp-142 together coordinate a divalent metal cation. A Phosphothreonine modification is found at Thr-217. Ser-258 carries the phosphoserine modification.

This sequence belongs to the RNase HII family. Eukaryotic subfamily. As to quaternary structure, the RNase H2 complex is a heterotrimer composed of the catalytic subunit RNASEH2A and the non-catalytic subunits RNASEH2B and RNASEH2C. Mn(2+) is required as a cofactor. Requires Mg(2+) as cofactor.

It is found in the nucleus. It catalyses the reaction Endonucleolytic cleavage to 5'-phosphomonoester.. Its function is as follows. Catalytic subunit of RNase HII, an endonuclease that specifically degrades the RNA of RNA:DNA hybrids. Participates in DNA replication, possibly by mediating the removal of lagging-strand Okazaki fragment RNA primers during DNA replication. Mediates the excision of single ribonucleotides from DNA:RNA duplexes. The chain is Ribonuclease H2 subunit A (Rnaseh2a) from Rattus norvegicus (Rat).